Reading from the N-terminus, the 400-residue chain is Homoserine O-acetyltransferase (400 aa).

Positions 64-373 (NAILICHALT…TDRGHDAFLL (310 aa)) constitute an AB hydrolase-1 domain. Catalysis depends on S169, which acts as the Nucleophile. R239 contacts substrate. Catalysis depends on residues D335 and H368. A substrate-binding site is contributed by D369.

The protein belongs to the AB hydrolase superfamily. MetX family. Homodimer.

Its subcellular location is the cytoplasm. It catalyses the reaction L-homoserine + acetyl-CoA = O-acetyl-L-homoserine + CoA. The protein operates within amino-acid biosynthesis; L-methionine biosynthesis via de novo pathway; O-acetyl-L-homoserine from L-homoserine: step 1/1. Transfers an acetyl group from acetyl-CoA to L-homoserine, forming acetyl-L-homoserine. The protein is Homoserine O-acetyltransferase of Bradyrhizobium diazoefficiens (strain JCM 10833 / BCRC 13528 / IAM 13628 / NBRC 14792 / USDA 110).